The chain runs to 538 residues: Chaperonin GroEL 2 (538 aa).

Residues 29–32 (TLGP), 86–90 (DGTTT), Gly412, 479–481 (NAA), and Asp495 each bind ATP.

It belongs to the chaperonin (HSP60) family. As to quaternary structure, forms a cylinder of 14 subunits composed of two heptameric rings stacked back-to-back. Interacts with the co-chaperonin GroES.

It is found in the cytoplasm. It catalyses the reaction ATP + H2O + a folded polypeptide = ADP + phosphate + an unfolded polypeptide.. Functionally, together with its co-chaperonin GroES, plays an essential role in assisting protein folding. The GroEL-GroES system forms a nano-cage that allows encapsulation of the non-native substrate proteins and provides a physical environment optimized to promote and accelerate protein folding. The polypeptide is Chaperonin GroEL 2 (Renibacterium salmoninarum (strain ATCC 33209 / DSM 20767 / JCM 11484 / NBRC 15589 / NCIMB 2235)).